Reading from the N-terminus, the 914-residue chain is Eukaryotic initiation factor 4F subunit p130 (914 aa).

Over residues 1–12 (MTDQRGPPPPHP) the composition is skewed to pro residues. Disordered regions lie at residues 1–84 (MTDQ…YNNR), 128–205 (PPYT…NEAV), 240–351 (ERKK…VNKS), and 457–535 (IARN…LVPS). The span at 26 to 44 (NQYSGANNSQPNNHYNENL) shows a compositional bias: polar residues. The segment covering 59–73 (KNGKYGTNKYNNRNN) has biased composition (low complexity). Residue Ser74 is modified to Phosphoserine. Residues 145-155 (PKTTKIEITTK) are compositionally biased toward low complexity. Residues 156–195 (TGERLNLKKFHEEKKASKGEEKNDGVEQKSKSGTPFEKEA) are compositionally biased toward basic and acidic residues. Position 196 is a phosphothreonine (Thr196). The tract at residues 201-315 (ANEAVKDTLT…TGSVTKSVTF (115 aa)) is interaction with PAB1. Residues 240-263 (ERKKNGLISETEKKQETSNHDNTD) show a composition bias toward basic and acidic residues. Polar residues-rich tracts occupy residues 298 to 325 (SVKT…SSSQ) and 339 to 348 (ISDTTGGKTV). Residue Thr301 is modified to Phosphothreonine. Basic and acidic residues predominate over residues 496 to 529 (RMGDDRRSNRGYTSRKDREKAAEKAEEQAPKEEI). A Phosphoserine modification is found at Ser503. One can recognise an MIF4G domain in the interval 567 to 810 (ERKMKSLLNK…IDVKELREIK (244 aa)). Positions 833-914 (QLRQKKNSQR…ALMNNDGDSD (82 aa)) are disordered. Positions 841-867 (QRSNSRFNNHNQSNSNRYSSNRRNMQN) are enriched in low complexity. Residues 868-886 (TQRDSFASTKTGSFRNNQR) show a composition bias toward polar residues. Phosphoserine is present on Ser913.

The protein belongs to the eukaryotic initiation factor 4G family. As to quaternary structure, component of the eIF4F complex, which composition varies with external and internal environmental conditions. It is composed of at least eIF4A (TIF1/TIF2), eIF4E (TIF45) and eIF4G (TIF4631 or TIF4632). Interacts with PAT1 in a RNA-dependent manner.

The protein localises to the cytoplasm. In terms of biological role, component of the eIF4F complex, which interacts with the mRNA cap structure and serves as an initial point of assembly for the translation apparatus. Stimulates translation by interaction with polyadenylate-binding protein PAB1, bringing the 5'- and 3'-ends of the mRNA in proximity. The formation of this circular mRNP structure appears to be critical for the synergistic effects of the cap and the poly(A) tail in facilitating translation initiation, recycling of ribosomes, and mRNA stability. TIF4632 is probably essential when TIF4631 is missing. In Saccharomyces cerevisiae (strain ATCC 204508 / S288c) (Baker's yeast), this protein is Eukaryotic initiation factor 4F subunit p130.